The following is a 547-amino-acid chain: Rho GTPase-activating protein 36 (547 aa).

An N-terminal signal peptide occupies residues 1 to 40; the sequence is MGGCNPFLKAARTLCPRIMPPLLFLSAFIFLVNVLGGAPG. The 201-residue stretch at 226-426 folds into the Rho-GAP domain; sequence MSLNPIAKQI…AMIDNWDILF (201 aa). Residues 493 to 547 form a disordered region; that stretch reads FDEGSSEEPAVPPGTAHSHDDEEGAGNPPIPEQDRPLLRVPREKQAKTGIGYFFP. Residues 524-538 are compositionally biased toward basic and acidic residues; it reads EQDRPLLRVPREKQA.

GTPase activator for the Rho-type GTPases by converting them to an inactive GDP-bound state. In Ailuropoda melanoleuca (Giant panda), this protein is Rho GTPase-activating protein 36 (ARHGAP36).